The following is a 285-amino-acid chain: G patch domain-containing protein 11 (285 aa).

Residues 51–87 are a coiled coil; it reads MLRQIREARRKEEKQQEANLKNRQKSLKEEEQERRDI. The tract at residues 59–84 is disordered; that stretch reads RRKEEKQQEANLKNRQKSLKEEEQER. A G-patch domain is found at 95–141; it reads CENKGFALLQKMGYKSGQALGKSGGGIVEPIPLNIKTGKSGIGHEAS. At Ser141 the chain carries Phosphoserine. Lys149 bears the N6-acetyllysine mark. Over residues 218–235 the composition is skewed to acidic residues; that stretch reads EETEEDEEEKEQDEDEYK. Residues 218-237 form a disordered region; it reads EETEEDEEEKEQDEDEYKSE.

Belongs to the GPATCH11 family.

Its subcellular location is the chromosome. It localises to the centromere. The protein localises to the kinetochore. This chain is G patch domain-containing protein 11 (GPATCH11), found in Homo sapiens (Human).